Consider the following 352-residue polypeptide: DNA polymerase IV (352 aa).

In terms of domain architecture, UmuC spans 4-185; that stretch reads IIHVDMDCFF…LPLSKIPGVG (182 aa). Asp-8 and Asp-103 together coordinate Mg(2+). The active site involves Glu-104.

This sequence belongs to the DNA polymerase type-Y family. As to quaternary structure, monomer. The cofactor is Mg(2+).

The protein resides in the cytoplasm. The enzyme catalyses DNA(n) + a 2'-deoxyribonucleoside 5'-triphosphate = DNA(n+1) + diphosphate. Functionally, poorly processive, error-prone DNA polymerase involved in untargeted mutagenesis. Copies undamaged DNA at stalled replication forks, which arise in vivo from mismatched or misaligned primer ends. These misaligned primers can be extended by PolIV. Exhibits no 3'-5' exonuclease (proofreading) activity. May be involved in translesional synthesis, in conjunction with the beta clamp from PolIII. This is DNA polymerase IV from Yersinia enterocolitica serotype O:8 / biotype 1B (strain NCTC 13174 / 8081).